The sequence spans 147 residues: Large ribosomal subunit protein uL15 (147 aa).

Over residues 1-28 (MIRRRKKVRKLRGSHTHGWGCKKKHRGG) the composition is skewed to basic residues. Positions 1 to 43 (MIRRRKKVRKLRGSHTHGWGCKKKHRGGGSKGGRGMAGTGKRN) are disordered. A compositionally biased stretch (gly residues) spans 29 to 38 (GSKGGRGMAG).

Belongs to the universal ribosomal protein uL15 family. In terms of assembly, part of the 50S ribosomal subunit.

Functionally, binds to the 23S rRNA. The protein is Large ribosomal subunit protein uL15 of Pyrococcus abyssi (strain GE5 / Orsay).